Here is a 111-residue protein sequence, read N- to C-terminus: Large ribosomal subunit protein P2B (111 aa).

The segment at 62 to 111 is disordered; sequence LASVPSGGAAAGGASASTGAAAGGAAEAEEEKEEEAKEESDDDMGFGLFD. Positions 67–87 are enriched in low complexity; that stretch reads SGGAAAGGASASTGAAAGGAA. Positions 88–105 are enriched in acidic residues; the sequence is EAEEEKEEEAKEESDDDM. S101 is modified (phosphoserine).

Belongs to the eukaryotic ribosomal protein P1/P2 family.

In terms of biological role, plays an important role in the elongation step of protein synthesis. This Candida albicans (Yeast) protein is Large ribosomal subunit protein P2B (RPP2B).